Consider the following 328-residue polypeptide: Malate dehydrogenase (328 aa).

An NAD(+)-binding site is contributed by 12 to 18; the sequence is GAAGQIG. 2 residues coordinate substrate: arginine 93 and arginine 99. NAD(+)-binding positions include asparagine 106, glutamine 113, and 130–132; that span reads TGN. Substrate is bound by residues asparagine 132 and arginine 163. The active-site Proton acceptor is the histidine 188.

This sequence belongs to the LDH/MDH superfamily. MDH type 2 family.

It catalyses the reaction (S)-malate + NAD(+) = oxaloacetate + NADH + H(+). In terms of biological role, catalyzes the reversible oxidation of malate to oxaloacetate. In Kocuria rhizophila (strain ATCC 9341 / DSM 348 / NBRC 103217 / DC2201), this protein is Malate dehydrogenase.